Reading from the N-terminus, the 1066-residue chain is Allene oxide synthase-lipoxygenase protein (1066 aa).

The allene oxide synthase stretch occupies residues 1-371 (MTWKNFGFEI…LKIGSLVPAG (371 aa)). Tyr-353 contributes to the heme binding site. Residues 372-1066 (QNAIYNVEVE…PERIPNGTAI (695 aa)) form an arachidonate 8-lipoxygenase region. Residues 374–490 (AIYNVEVETG…KDMVLFPGEA (117 aa)) form the PLAT domain. The Ca(2+) site is built by His-387, Gly-389, Thr-390, Asp-391, Asn-416, Asp-417, Glu-419, Asp-452, and Asp-454. A Lipoxygenase domain is found at 491–1066 (TLPFNEVPAI…PERIPNGTAI (576 aa)). 5 residues coordinate Fe cation: His-757, His-762, His-943, Asn-947, and Ile-1066.

The protein in the C-terminal section; belongs to the lipoxygenase family. Dimer. The cofactor is Ca(2+). Fe cation is required as a cofactor. Requires heme as cofactor.

Its subcellular location is the cytoplasm. It is found in the membrane. It catalyses the reaction (5Z,8Z,11Z,14Z)-eicosatetraenoate + O2 = (8R)-hydroperoxy-(5Z,9E,11Z,14Z)-eicosatetraenoate. The catalysed reaction is (8R)-hydroperoxy-(5Z,9E,11Z,14Z)-eicosatetraenoate = 8,9-epoxy-(5Z,9E,11Z,14Z)-eicosatetraenoate + H2O. The enzyme catalyses (5Z,8Z,11Z,14Z,17Z)-eicosapentaenoate + O2 = (8R)-hydroperoxy-(5Z,9E,11Z,14Z,17Z)-eicosapentaenoate. It carries out the reaction (4Z,7Z,10Z,13Z,16Z,19Z)-docosahexaenoate + O2 = 10-hydroperoxy-(4Z,7Z,11E,13Z,16Z,19Z)-docosahexaenoate. It catalyses the reaction (8Z,11Z,14Z)-eicosatrienoate + O2 = (8R)-hydroperoxy-(9E,11Z,14Z)-eicosatrienoate. The catalysed reaction is (8Z,11Z,14Z)-eicosatrienoate + O2 = 10-hydroperoxy-(8Z,11Z,14Z)-eicosatrienoate. The enzyme catalyses (8Z,11Z,14Z)-eicosatrienoate + O2 = 11-hydroperoxy-(8Z,12E,14Z)-eicosatrienoate. It participates in lipid metabolism; arachidonate metabolism. The protein operates within lipid metabolism; fatty acid metabolism. Lipoxygenase activity is stimulated by calcium, sodium, lithium and potassium ions. Calcium binding promotes interaction with membranes and thus facilitates access to substrates. In terms of biological role, bifunctional enzyme which is responsible for allene oxide biosynthesis via a two-step reaction; first the lipoxygenase reaction that converts polyunsaturated fatty acids such as arachidonate ((5Z,8Z,11Z,14Z)-eicosatetraenoate) into a (8R)-hydroperoxide intermediate ((8R)-hydroperoxy-(5Z,9E,11Z,14Z)-eicosatetraenoate) followed by the allene oxide synthase reaction that converts the hydroperoxide intermediate ((8R)-hydroperoxy-(5Z,9E,11Z,14Z)-eicosatetraenoate) into the allene oxide (8,9-epoxy-(5Z,9E,11Z,14Z)-eicosatetraenoate). Shows preference for C20 or C22 highly polyunsaturated fatty acids and no activity with C18 fatty acids in vitro. Fatty acid allene oxides are intermediates in the formation of cyclopentenones or hydrolytic products in marine systems, most notably the prostanoid-related clavulones. This Plexaura homomalla (Black sea rod) protein is Allene oxide synthase-lipoxygenase protein.